The sequence spans 365 residues: UDP-N-acetylglucosamine--N-acetylmuramyl-(pentapeptide) pyrophosphoryl-undecaprenol N-acetylglucosamine transferase (365 aa).

Residues Thr13 to Gly15, Asn125, Arg165, Ser192, and Gln293 each bind UDP-N-acetyl-alpha-D-glucosamine.

Belongs to the glycosyltransferase 28 family. MurG subfamily.

The protein resides in the cell inner membrane. It catalyses the reaction di-trans,octa-cis-undecaprenyl diphospho-N-acetyl-alpha-D-muramoyl-L-alanyl-D-glutamyl-meso-2,6-diaminopimeloyl-D-alanyl-D-alanine + UDP-N-acetyl-alpha-D-glucosamine = di-trans,octa-cis-undecaprenyl diphospho-[N-acetyl-alpha-D-glucosaminyl-(1-&gt;4)]-N-acetyl-alpha-D-muramoyl-L-alanyl-D-glutamyl-meso-2,6-diaminopimeloyl-D-alanyl-D-alanine + UDP + H(+). It functions in the pathway cell wall biogenesis; peptidoglycan biosynthesis. Its function is as follows. Cell wall formation. Catalyzes the transfer of a GlcNAc subunit on undecaprenyl-pyrophosphoryl-MurNAc-pentapeptide (lipid intermediate I) to form undecaprenyl-pyrophosphoryl-MurNAc-(pentapeptide)GlcNAc (lipid intermediate II). This Ruegeria pomeroyi (strain ATCC 700808 / DSM 15171 / DSS-3) (Silicibacter pomeroyi) protein is UDP-N-acetylglucosamine--N-acetylmuramyl-(pentapeptide) pyrophosphoryl-undecaprenol N-acetylglucosamine transferase.